Here is a 78-residue protein sequence, read N- to C-terminus: Mitotic-spindle organizing protein 1 (78 aa).

Residue Ala2 is modified to N-acetylalanine.

The protein belongs to the MOZART1 family. Associates with the gamma-tubulin ring complex (gTuRC) consisting of TUBGCP2, TUBGCP3, TUBGCP4, TUBGCP5 and TUBGCP6 and gamma-tubulin TUBG1 or TUBG2; within the complex, interacts with TUBGCP3 and TUBGCP6 to form a luminal bridge with actin that stabilizes the initial structure during complex assembly. Interacts with TUBG1.

The protein localises to the cytoplasm. Its subcellular location is the cytoskeleton. It is found in the microtubule organizing center. It localises to the centrosome. The protein resides in the spindle. Its function is as follows. Required for the recruitment and the assembly of the gamma-tubulin ring complex (gTuRC) at the centrosome. The gTuRC regulates the minus-end nucleation of alpha-beta tubulin heterodimers that grow into microtubule protafilaments, a critical step in centrosome duplication and spindle formation. The polypeptide is Mitotic-spindle organizing protein 1 (Mzt1) (Mus musculus (Mouse)).